The sequence spans 49 residues: MPTWLTTIFSVVIVLAIFLYFGLLIYQKIRQIRGKKKDKKEIERKESNK.

A helical membrane pass occupies residues 5 to 25 (LTTIFSVVIVLAIFLYFGLLI).

Belongs to the plectrovirus ORF12 protein family.

It localises to the host membrane. This is an uncharacterized protein from Spiroplasma virus SpV1-R8A2 B (SpV1).